Reading from the N-terminus, the 814-residue chain is Leucine--tRNA ligase (814 aa).

The short motif at 42-52 (PYPSGNLHIGH) is the 'HIGH' region element. The 'KMSKS' region motif lies at 582-586 (KMSKS). Lys-585 is an ATP binding site.

Belongs to the class-I aminoacyl-tRNA synthetase family.

The protein resides in the cytoplasm. It catalyses the reaction tRNA(Leu) + L-leucine + ATP = L-leucyl-tRNA(Leu) + AMP + diphosphate. The chain is Leucine--tRNA ligase from Herpetosiphon aurantiacus (strain ATCC 23779 / DSM 785 / 114-95).